The following is a 316-amino-acid chain: Ribosomal RNA small subunit methyltransferase A (316 aa).

S-adenosyl-L-methionine is bound by residues N33, V35, G60, E81, D110, and N133.

The protein belongs to the class I-like SAM-binding methyltransferase superfamily. rRNA adenine N(6)-methyltransferase family. RsmA subfamily.

It localises to the cytoplasm. The enzyme catalyses adenosine(1518)/adenosine(1519) in 16S rRNA + 4 S-adenosyl-L-methionine = N(6)-dimethyladenosine(1518)/N(6)-dimethyladenosine(1519) in 16S rRNA + 4 S-adenosyl-L-homocysteine + 4 H(+). In terms of biological role, specifically dimethylates two adjacent adenosines (A1518 and A1519) in the loop of a conserved hairpin near the 3'-end of 16S rRNA in the 30S particle. May play a critical role in biogenesis of 30S subunits. The sequence is that of Ribosomal RNA small subunit methyltransferase A from Corynebacterium jeikeium (strain K411).